We begin with the raw amino-acid sequence, 314 residues long: Acetaldehyde dehydrogenase 1 (314 aa).

15 to 18 contributes to the NAD(+) binding site; that stretch reads SGNI. The active-site Acyl-thioester intermediate is the Cys-133. NAD(+) is bound by residues 164–172 and Asn-291; that span reads SAGPGTRAN.

It belongs to the acetaldehyde dehydrogenase family.

The enzyme catalyses acetaldehyde + NAD(+) + CoA = acetyl-CoA + NADH + H(+). This chain is Acetaldehyde dehydrogenase 1, found in Paraburkholderia xenovorans (strain LB400).